The primary structure comprises 882 residues: Envelope glycoprotein gp160 (882 aa).

Positions 1–22 are cleaved as a signal peptide; that stretch reads MGCLGNQLLIAILLLSVYGIYC. Over 23 to 697 the chain is Extracellular; sequence IQYVTVFYGV…TSWIKYIQYG (675 aa). Residue asparagine 37 is glycosylated (N-linked (GlcNAc...) asparagine; by host). A disulfide bridge connects residues cysteine 44 and cysteine 57. Residues asparagine 70, asparagine 114, asparagine 149, asparagine 159, asparagine 174, asparagine 187, asparagine 201, asparagine 205, asparagine 215, asparagine 247, asparagine 250, asparagine 257, asparagine 281, asparagine 287, asparagine 298, asparagine 309, asparagine 319, asparagine 374, and asparagine 380 are each glycosylated (N-linked (GlcNAc...) asparagine; by host). Cystine bridges form between cysteine 101–cysteine 223, cysteine 108–cysteine 214, cysteine 113–cysteine 171, cysteine 236–cysteine 266, and cysteine 246–cysteine 258. The V1 stretch occupies residues 113-170; sequence CNKSETDKWGLTKSSTTTASTTTTTTAKSVETRDIVNETSPCVVHDNCTGLEQEPMIS. The segment at 171-214 is V2; that stretch reads CKFNMTGLKRDKKKEYNETWYSADLVCEQGNSTGNESRCYMNHC. Residues 314 to 346 form a V3 region; sequence CRRPGNKTVLPVTIMSALVFHSQPVNERPKQAW. The cysteines at positions 314 and 347 are disulfide-linked. Intrachain disulfides connect cysteine 398-cysteine 462 and cysteine 405-cysteine 435. The segment at 405–435 is V4; sequence CKMNWFLNWVEDRSLTTQKPKERHKRNYVPC. Asparagine 463, asparagine 474, and asparagine 479 each carry an N-linked (GlcNAc...) asparagine; by host glycan. The V5 stretch occupies residues 478–485; it reads GNQTSITM. The fusion peptide stretch occupies residues 529–549; sequence GVFVLGFLGFLATAGSAMGAA. Residues 592 to 608 are immunosuppression; the sequence is LQTRVSAIEKYLKDQAQ. 3 N-linked (GlcNAc...) asparagine; by host glycosylation sites follow: asparagine 628, asparagine 637, and asparagine 653. Positions 637 to 669 form a coiled coil; the sequence is NETWQEWERKVDFLEANITALLEEAQIQQEKNM. The tract at residues 674–695 is MPER; binding to GalCer; it reads KLNSWDVFGNWFDLTSWIKYIQ. Residues 698–718 traverse the membrane as a helical segment; it reads IYIIVGVILLRIVIYIVQMLA. The Cytoplasmic segment spans residues 719 to 882; sequence RLRQGYRPVF…IRQGLELTLL (164 aa). The YXXV motif; contains endocytosis signal signature appears at 724–727; the sequence is YRPV. The disordered stretch occupies residues 738–761; that stretch reads THTQQDPALPTKEGKKGDGGGSGG. A lipid anchor (S-palmitoyl cysteine; by host) is attached at cysteine 790. The Di-leucine internalization motif motif lies at 881 to 882; that stretch reads LL.

In terms of assembly, the mature envelope protein (Env) consists of a homotrimer of non-covalently associated gp120-gp41 heterodimers. The resulting complex protrudes from the virus surface as a spike. Interacts with host CD4 and CCR5. Gp120 also interacts with the C-type lectins CD209/DC-SIGN and CLEC4M/DC-SIGNR (collectively referred to as DC-SIGN(R)). As to quaternary structure, the mature envelope protein (Env) consists of a homotrimer of non-covalently associated gp120-gp41 heterodimers. The resulting complex protrudes from the virus surface as a spike. In terms of processing, specific enzymatic cleavages in vivo yield mature proteins. Envelope glycoproteins are synthesized as an inactive precursor that is heavily N-glycosylated and processed likely by host cell furin in the Golgi to yield the mature SU and TM proteins. The cleavage site between SU and TM requires the minimal sequence [KR]-X-[KR]-R. Palmitoylation of the transmembrane protein and of Env polyprotein (prior to its proteolytic cleavage) is essential for their association with host cell membrane lipid rafts. Palmitoylation is therefore required for envelope trafficking to classical lipid rafts, but not for viral replication.

It is found in the virion membrane. Its subcellular location is the host cell membrane. The protein localises to the host endosome membrane. The surface protein gp120 (SU) attaches the virus to the host lymphoid cell by binding to the primary receptor CD4. This interaction induces a structural rearrangement creating a high affinity binding site for a chemokine coreceptor like CCR5. This peculiar 2 stage receptor-interaction strategy allows gp120 to maintain the highly conserved coreceptor-binding site in a cryptic conformation, protected from neutralizing antibodies. These changes are transmitted to the transmembrane protein gp41 and are thought to activate its fusogenic potential by unmasking its fusion peptide. Its function is as follows. Surface protein gp120 (SU) may target the virus to gut-associated lymphoid tissue (GALT) by binding host ITGA4/ITGB7 (alpha-4/beta-7 integrins), a complex that mediates T-cell migration to the GALT. Interaction between gp120 and ITGA4/ITGB7 would allow the virus to enter GALT early in the infection, infecting and killing most of GALT's resting CD4+ T-cells. This T-cell depletion is believed to be the major insult to the host immune system leading to AIDS. In terms of biological role, the surface protein gp120 is a ligand for CD209/DC-SIGN and CLEC4M/DC-SIGNR, which are respectively found on dendritic cells (DCs), and on endothelial cells of liver sinusoids and lymph node sinuses. These interactions allow capture of viral particles at mucosal surfaces by these cells and subsequent transmission to permissive cells. DCs are professional antigen presenting cells, critical for host immunity by inducing specific immune responses against a broad variety of pathogens. They act as sentinels in various tissues where they take up antigen, process it, and present it to T-cells following migration to lymphoid organs. SIV subverts the migration properties of dendritic cells to gain access to CD4+ T-cells in lymph nodes. Virus transmission to permissive T-cells occurs either in trans (without DCs infection, through viral capture and transmission), or in cis (following DCs productive infection, through the usual CD4-gp120 interaction), thereby inducing a robust infection. In trans infection, bound virions remain infectious over days and it is proposed that they are not degraded, but protected in non-lysosomal acidic organelles within the DCs close to the cell membrane thus contributing to the viral infectious potential during DCs' migration from the periphery to the lymphoid tissues. On arrival at lymphoid tissues, intact virions recycle back to DCs' cell surface allowing virus transmission to CD4+ T-cells. Virion capture also seems to lead to MHC-II-restricted viral antigen presentation, and probably to the activation of SIV-specific CD4+ cells. Functionally, the transmembrane protein gp41 (TM) acts as a class I viral fusion protein. Under the current model, the protein has at least 3 conformational states: pre-fusion native state, pre-hairpin intermediate state, and post-fusion hairpin state. During fusion of viral and target intracellular membranes, the coiled coil regions (heptad repeats) assume a trimer-of-hairpins structure, positioning the fusion peptide in close proximity to the C-terminal region of the ectodomain. The formation of this structure appears to drive apposition and subsequent fusion of viral and target cell membranes. Complete fusion occurs in host cell endosomes. The virus undergoes clathrin-dependent internalization long before endosomal fusion, thus minimizing the surface exposure of conserved viral epitopes during fusion and reducing the efficacy of inhibitors targeting these epitopes. Membranes fusion leads to delivery of the nucleocapsid into the cytoplasm. The envelope glycoprotein gp160 precursor down-modulates cell surface CD4 antigen by interacting with it in the endoplasmic reticulum and blocking its transport to the cell surface. Its function is as follows. The gp120-gp41 heterodimer allows rapid transcytosis of the virus through CD4 negative cells such as simple epithelial monolayers of the intestinal, rectal and endocervical epithelial barriers. Both gp120 and gp41 specifically recognize glycosphingolipids galactosyl-ceramide (GalCer) or 3' sulfo-galactosyl-ceramide (GalS) present in the lipid rafts structures of epithelial cells. Binding to these alternative receptors allows the rapid transcytosis of the virus through the epithelial cells. This transcytotic vesicle-mediated transport of virions from the apical side to the basolateral side of the epithelial cells does not involve infection of the cells themselves. In Simian immunodeficiency virus (isolate Mm142-83) (SIV-mac), this protein is Envelope glycoprotein gp160 (env).